We begin with the raw amino-acid sequence, 208 residues long: Thiamine-phosphate synthase (208 aa).

Residues 37–39 (QVR) and Asn-70 contribute to the 4-amino-2-methyl-5-(diphosphooxymethyl)pyrimidine site. Residues Asp-71 and Asp-90 each coordinate Mg(2+). Residue Thr-109 coordinates 4-amino-2-methyl-5-(diphosphooxymethyl)pyrimidine. 135 to 137 (TTS) is a 2-[(2R,5Z)-2-carboxy-4-methylthiazol-5(2H)-ylidene]ethyl phosphate binding site. A 4-amino-2-methyl-5-(diphosphooxymethyl)pyrimidine-binding site is contributed by Lys-138. Gly-166 contributes to the 2-[(2R,5Z)-2-carboxy-4-methylthiazol-5(2H)-ylidene]ethyl phosphate binding site.

It belongs to the thiamine-phosphate synthase family. The cofactor is Mg(2+).

It catalyses the reaction 2-[(2R,5Z)-2-carboxy-4-methylthiazol-5(2H)-ylidene]ethyl phosphate + 4-amino-2-methyl-5-(diphosphooxymethyl)pyrimidine + 2 H(+) = thiamine phosphate + CO2 + diphosphate. The catalysed reaction is 2-(2-carboxy-4-methylthiazol-5-yl)ethyl phosphate + 4-amino-2-methyl-5-(diphosphooxymethyl)pyrimidine + 2 H(+) = thiamine phosphate + CO2 + diphosphate. The enzyme catalyses 4-methyl-5-(2-phosphooxyethyl)-thiazole + 4-amino-2-methyl-5-(diphosphooxymethyl)pyrimidine + H(+) = thiamine phosphate + diphosphate. Its pathway is cofactor biosynthesis; thiamine diphosphate biosynthesis; thiamine phosphate from 4-amino-2-methyl-5-diphosphomethylpyrimidine and 4-methyl-5-(2-phosphoethyl)-thiazole: step 1/1. Functionally, condenses 4-methyl-5-(beta-hydroxyethyl)thiazole monophosphate (THZ-P) and 2-methyl-4-amino-5-hydroxymethyl pyrimidine pyrophosphate (HMP-PP) to form thiamine monophosphate (TMP). This chain is Thiamine-phosphate synthase, found in Salinispora arenicola (strain CNS-205).